A 304-amino-acid chain; its full sequence is Non-specific ribonucleoside hydrolase RihC (304 aa).

H233 is an active-site residue.

The protein belongs to the IUNH family. RihC subfamily.

Its function is as follows. Hydrolyzes both purine and pyrimidine ribonucleosides with a broad-substrate specificity. This is Non-specific ribonucleoside hydrolase RihC from Klebsiella pneumoniae subsp. pneumoniae (strain ATCC 700721 / MGH 78578).